The chain runs to 338 residues: Electron transfer flavoprotein subunit alpha (338 aa).

275 to 303 (IYIACAISGAIQPLAGMTGSDCIIAINKD) is an FAD binding site.

This sequence belongs to the ETF alpha-subunit/FixB family. As to quaternary structure, heterodimer of an alpha and a beta subunit. The cofactor is FAD.

In terms of biological role, the electron transfer flavoprotein serves as a specific electron acceptor for other dehydrogenases. It transfers the electrons to the main respiratory chain via ETF-ubiquinone oxidoreductase (ETF dehydrogenase). The protein is Electron transfer flavoprotein subunit alpha (etfA) of Megasphaera elsdenii.